A 115-amino-acid chain; its full sequence is Colicin-Ib immunity protein (115 aa).

Helical transmembrane passes span valine 7–glycine 27, phenylalanine 38–isoleucine 58, and isoleucine 87–isoleucine 107.

The protein localises to the cell membrane. In terms of biological role, this protein is able to protect a cell, which harbors the plasmid IncI1 ColIb-P9 encoding colicin Ib, against colicin Ib. The chain is Colicin-Ib immunity protein from Escherichia coli.